The chain runs to 507 residues: ATP synthase subunit alpha (507 aa).

170-177 (GDRQTGKT) is a binding site for ATP.

This sequence belongs to the ATPase alpha/beta chains family. In terms of assembly, F-type ATPases have 2 components, CF(1) - the catalytic core - and CF(0) - the membrane proton channel. CF(1) has five subunits: alpha(3), beta(3), gamma(1), delta(1), epsilon(1). CF(0) has three main subunits: a(1), b(2) and c(9-12). The alpha and beta chains form an alternating ring which encloses part of the gamma chain. CF(1) is attached to CF(0) by a central stalk formed by the gamma and epsilon chains, while a peripheral stalk is formed by the delta and b chains.

It is found in the cell inner membrane. It carries out the reaction ATP + H2O + 4 H(+)(in) = ADP + phosphate + 5 H(+)(out). Its function is as follows. Produces ATP from ADP in the presence of a proton gradient across the membrane. The alpha chain is a regulatory subunit. The chain is ATP synthase subunit alpha from Fervidobacterium nodosum (strain ATCC 35602 / DSM 5306 / Rt17-B1).